The chain runs to 269 residues: MVRIAIAGAAGRMGRNLVKASHINPDASVTAGSERPESSLVGVDIGELCGEGKFDVFLTDDLEKEVDNFDVVIDFTVPVSTLANLELCKQHGKSIVIGTTGFSEEERALIDAVAKHVPVVMAPNYSVGVNLVFKLLEKAAKVMGDYCDVEIVEAHHRHKVDAPSGTAIGMGEAIAGAMGNKLSDVAVYAREGITGERTKDEIGFATIRAGDIVGEHTAMFADIGERVEITHKATDRMTFANGAVKAAVWLHSKPAGFYTMTDVLGLNEL.

NAD(+) is bound by residues 8–13 (GAAGRM) and Glu34. An NADP(+)-binding site is contributed by Arg35. Residues 98–100 (GTT) and 122–125 (APNY) contribute to the NAD(+) site. His155 acts as the Proton donor/acceptor in catalysis. His156 serves as a coordination point for (S)-2,3,4,5-tetrahydrodipicolinate. Lys159 serves as the catalytic Proton donor. 165-166 (GT) contributes to the (S)-2,3,4,5-tetrahydrodipicolinate binding site.

Belongs to the DapB family.

The protein localises to the cytoplasm. It carries out the reaction (S)-2,3,4,5-tetrahydrodipicolinate + NAD(+) + H2O = (2S,4S)-4-hydroxy-2,3,4,5-tetrahydrodipicolinate + NADH + H(+). It catalyses the reaction (S)-2,3,4,5-tetrahydrodipicolinate + NADP(+) + H2O = (2S,4S)-4-hydroxy-2,3,4,5-tetrahydrodipicolinate + NADPH + H(+). The protein operates within amino-acid biosynthesis; L-lysine biosynthesis via DAP pathway; (S)-tetrahydrodipicolinate from L-aspartate: step 4/4. In terms of biological role, catalyzes the conversion of 4-hydroxy-tetrahydrodipicolinate (HTPA) to tetrahydrodipicolinate. The polypeptide is 4-hydroxy-tetrahydrodipicolinate reductase (Vibrio parahaemolyticus serotype O3:K6 (strain RIMD 2210633)).